We begin with the raw amino-acid sequence, 539 residues long: Protein ENTREP2 (539 aa).

The next 4 helical transmembrane spans lie at 31–51 (IVLALGATQMALGCLIVAVSF), 65–85 (SCPFWAGFSVLLSGLIGVVSW), 89–109 (LSLVITFFMLLSAVCVMLNLA), and 176–196 (LLFSVCALNVLSTIVCALATA). The segment at 301 to 481 (VVGQPPASQV…TSKERPRSLV (181 aa)) is disordered. Polar residues predominate over residues 306 to 331 (PASQVTSIGQQVAESSSGDPNTSAGF). The span at 347 to 365 (GTATPGSSPSPDGPVGAPA) shows a compositional bias: low complexity. Residues 395–408 (SRSTSDPTLCTSSM) show a composition bias toward polar residues.

The protein belongs to the ENTREP family.

The protein resides in the membrane. In Homo sapiens (Human), this protein is Protein ENTREP2.